A 463-amino-acid polypeptide reads, in one-letter code: Membrane-bound lytic murein transglycosylase F (463 aa).

An N-terminal signal peptide occupies residues 1 to 33; sequence MQSQDYKKRLKLQIIIILSIAVMSCGVPNVPTA. The tract at residues 34–272 is non-LT domain; sequence LSSLLERESI…VLEDKYFGHI (239 aa). The interval 273 to 463 is LT domain; it reads RQFDYVDSRA…LVWLDEQGKI (191 aa). Residue Glu317 is part of the active site.

The protein in the N-terminal section; belongs to the bacterial solute-binding protein 3 family. In the C-terminal section; belongs to the transglycosylase Slt family.

Its subcellular location is the cell outer membrane. The enzyme catalyses Exolytic cleavage of the (1-&gt;4)-beta-glycosidic linkage between N-acetylmuramic acid (MurNAc) and N-acetylglucosamine (GlcNAc) residues in peptidoglycan, from either the reducing or the non-reducing ends of the peptidoglycan chains, with concomitant formation of a 1,6-anhydrobond in the MurNAc residue.. Functionally, murein-degrading enzyme that degrades murein glycan strands and insoluble, high-molecular weight murein sacculi, with the concomitant formation of a 1,6-anhydromuramoyl product. Lytic transglycosylases (LTs) play an integral role in the metabolism of the peptidoglycan (PG) sacculus. Their lytic action creates space within the PG sacculus to allow for its expansion as well as for the insertion of various structures such as secretion systems and flagella. In Alteromonas mediterranea (strain DSM 17117 / CIP 110805 / LMG 28347 / Deep ecotype), this protein is Membrane-bound lytic murein transglycosylase F.